A 299-amino-acid chain; its full sequence is Ribosomal protein L11 methyltransferase (299 aa).

Thr-152, Gly-172, Asp-194, and Asn-234 together coordinate S-adenosyl-L-methionine.

The protein belongs to the methyltransferase superfamily. PrmA family.

The protein resides in the cytoplasm. It catalyses the reaction L-lysyl-[protein] + 3 S-adenosyl-L-methionine = N(6),N(6),N(6)-trimethyl-L-lysyl-[protein] + 3 S-adenosyl-L-homocysteine + 3 H(+). Methylates ribosomal protein L11. This is Ribosomal protein L11 methyltransferase from Geobacter sulfurreducens (strain ATCC 51573 / DSM 12127 / PCA).